Here is a 432-residue protein sequence, read N- to C-terminus: Glutamyl-tRNA reductase (432 aa).

Substrate is bound by residues Thr50–Arg53, Ser110, Glu115–Gln117, and Gln121. The Nucleophile role is filled by Cys51. Residue Gly190–Ser195 coordinates NADP(+).

It belongs to the glutamyl-tRNA reductase family. In terms of assembly, homodimer.

The enzyme catalyses (S)-4-amino-5-oxopentanoate + tRNA(Glu) + NADP(+) = L-glutamyl-tRNA(Glu) + NADPH + H(+). Its pathway is porphyrin-containing compound metabolism; protoporphyrin-IX biosynthesis; 5-aminolevulinate from L-glutamyl-tRNA(Glu): step 1/2. Catalyzes the NADPH-dependent reduction of glutamyl-tRNA(Glu) to glutamate 1-semialdehyde (GSA). The chain is Glutamyl-tRNA reductase from Aliarcobacter butzleri (strain RM4018) (Arcobacter butzleri).